Consider the following 313-residue polypeptide: Hydroxyacylglutathione hydrolase, mitochondrial (313 aa).

Zn(2+)-binding residues include His-107, His-109, Asp-111, His-112, His-163, and Asp-187. Substrate contacts are provided by residues 196–198 (KFF) and 226–228 (HEY). Position 226 (His-226) interacts with Zn(2+). Basic and acidic residues-rich tracts occupy residues 285-294 (VQEHAGERDP) and 301-313 (IRKEKDHFKVPKD). Positions 285–313 (VQEHAGERDPISTMGAIRKEKDHFKVPKD) are disordered. Substrate is bound at residue 302 to 305 (RKEK).

This sequence belongs to the metallo-beta-lactamase superfamily. Glyoxalase II family. In terms of assembly, monomer. It depends on Zn(2+) as a cofactor.

Its subcellular location is the mitochondrion matrix. It is found in the cytoplasm. The catalysed reaction is an S-(2-hydroxyacyl)glutathione + H2O = a 2-hydroxy carboxylate + glutathione + H(+). It catalyses the reaction (R)-S-lactoylglutathione + H2O = (R)-lactate + glutathione + H(+). Its function is as follows. Thiolesterase that catalyzes the hydrolysis of S-D-lactoyl-glutathione to form glutathione and D-lactic acid. In Xenopus tropicalis (Western clawed frog), this protein is Hydroxyacylglutathione hydrolase, mitochondrial (hagh).